Consider the following 193-residue polypeptide: Ribosomal RNA small subunit methyltransferase G (193 aa).

Residues G62, F67, 111–112, and R125 contribute to the S-adenosyl-L-methionine site; that span reads IE.

This sequence belongs to the methyltransferase superfamily. RNA methyltransferase RsmG family.

The protein localises to the cytoplasm. It catalyses the reaction guanosine(527) in 16S rRNA + S-adenosyl-L-methionine = N(7)-methylguanosine(527) in 16S rRNA + S-adenosyl-L-homocysteine. Specifically methylates the N7 position of guanine in position 527 of 16S rRNA. The protein is Ribosomal RNA small subunit methyltransferase G of Gluconobacter oxydans (strain 621H) (Gluconobacter suboxydans).